A 491-amino-acid polypeptide reads, in one-letter code: MSQLKIGSSQCLWTSICIVLFVLSMARGAVSRNYGDALTKSLLYFEAQRSGKLPSNQRVTWRGDSALRDGSDAHVDLTGGYYDAGDNMKFGFPLAFFTTMLAWSNIEMATQLKAHQEQENALAALKWATDFLIKAHPEPNVLYGQVGDGNSDHECWMRPEDMTTPRPSFRIDAQHPGSDLAGETAAAMAAASIAFAPSDEAYAQILIGHAKELFEFAKAYPGIYQNSITNAGGFYASSGYEDELLWAAAWLHRATNDQIYLDYLTQASGTGGPRTAFSWDDKFVGAQVLVAKLALEGKVESNGKIAEYKSMAEQFICNCAQKGSNNVKKTPGGLLYFLPWNNLQYTTAATFVLSAYSKYLTDAKASIQCPNGALQASDLLDLARSQVDYILGSNPQNMSYMVGVGTNYPKKPHHRAASIVSITKDKTPVTCSEGFDAWFNNPAPNPNVLMGAVVGGPNDNDVYGDERTDYQHAEPAPATAAPFVGVLAAVA.

A signal peptide spans 1-31; that stretch reads MSQLKIGSSQCLWTSICIVLFVLSMARGAVS. The active-site Nucleophile is the Asp-86. Asn-397 carries an N-linked (GlcNAc...) asparagine glycan. Catalysis depends on residues His-413, Asp-465, and Glu-474.

Belongs to the glycosyl hydrolase 9 (cellulase E) family.

The protein resides in the secreted. The catalysed reaction is Endohydrolysis of (1-&gt;4)-beta-D-glucosidic linkages in cellulose, lichenin and cereal beta-D-glucans.. The polypeptide is Endoglucanase 14 (Arabidopsis thaliana (Mouse-ear cress)).